Consider the following 589-residue polypeptide: Alpha-1,2-mannosyltransferase MNN22 (589 aa).

The Cytoplasmic portion of the chain corresponds to 1-16 (MGSIFKDGRRILVRPK). Residues 17–33 (SLIICLCLISIIFTQLI) traverse the membrane as a helical segment. Residues 34-589 (RYQYQLIADE…NTIAWLGKKT (556 aa)) are Extracellular-facing. A disordered region spans residues 50 to 77 (EDHSSSQSLKNTKLNSTRSSSPISPPKS). Over residues 54-71 (SSQSLKNTKLNSTRSSSP) the composition is skewed to polar residues. N-linked (GlcNAc...) asparagine glycosylation is found at asparagine 64, asparagine 332, and asparagine 530.

It belongs to the MNN1/MNT family.

The protein resides in the golgi apparatus membrane. Its pathway is protein modification; protein glycosylation. Functionally, alpha-1,2-mannosyltransferase required for cell wall integrity. Responsible for addition of the first alpha-1,2-linked mannose to form the branches on the mannan backbone of oligosaccharides. Addition of alpha-1,2-mannose is required for stabilization of the alpha-1,6-mannose backbone and hence regulates mannan fibril length; and is important for both immune recognition and virulence. The chain is Alpha-1,2-mannosyltransferase MNN22 (MNN22) from Candida albicans (strain SC5314 / ATCC MYA-2876) (Yeast).